An 866-amino-acid polypeptide reads, in one-letter code: Paramyosin (866 aa).

The interval 1 to 22 (MMNHDTESHVKISRTIYRGVSP) is nonhelical region. Residues 23–839 (STTRLESRVR…AERTVTVRRV (817 aa)) are a coiled coil. Residues 840–866 (GPGGRAVSVARELSVTSNRGMRATSMM) form a nonhelical region region.

It belongs to the paramyosin family. Homodimer.

The protein localises to the cytoplasm. It localises to the myofibril. In terms of biological role, paramyosin is a major structural component of many thick filaments isolated from invertebrate muscles. This is Paramyosin from Schistosoma japonicum (Blood fluke).